A 369-amino-acid polypeptide reads, in one-letter code: Pulmonary surfactant-associated protein D (369 aa).

The first 20 residues, 1–20 (MLLLPLSVLLLLTQPWRSLG), serve as a signal peptide directing secretion. Cys35 and Cys40 each carry S-nitrosocysteine. The tract at residues 41–215 (SPPEDGLPGR…ERGAKGESGL (175 aa)) is disordered. One can recognise a Collagen-like domain in the interval 46–216 (GLPGRDGRDG…RGAKGESGLA (171 aa)). The segment covering 47-65 (LPGRDGRDGREGPRGEKGD) has biased composition (basic and acidic residues). Residue Pro78 is modified to 4-hydroxyproline. Lys87 carries the 5-hydroxylysine modification. N-linked (GlcNAc...) asparagine glycosylation is present at Asn90. Pro96 is modified (4-hydroxyproline). Lys99 carries the post-translational modification 5-hydroxylysine. The segment covering 139–148 (GPKGGVGAPG) has biased composition (gly residues). Pro165 and Pro171 each carry 4-hydroxyproline. Residues 165–191 (PGEPGAPGRAGAPGPAGAIGPQGPSGA) are compositionally biased toward low complexity. Over residues 198-210 (KGDRGTPGERGAK) the composition is skewed to basic and acidic residues. The stretch at 217–248 (EVNALRQRVGILEGQLQRLQNAFSQYKKAMLF) forms a coiled coil. A C-type lectin domain is found at 254 to 369 (VGEKIFKTEG…GEQRLVICEF (116 aa)). 2 disulfides stabilise this stretch: Cys275-Cys367 and Cys345-Cys359.

It belongs to the SFTPD family. In terms of assembly, oligomeric complex of 4 set of homotrimers. Hydroxylation on proline residues within the sequence motif, GXPG, is most likely to be 4-hydroxy as this fits the requirement for 4-hydroxylation in vertebrates. Post-translationally, S-nitrosylation at Cys-35 and Cys-40 alters the quaternary structure which results in a pro-inflammatory chemoattractive signaling activity with macrophages.

It is found in the secreted. The protein resides in the extracellular space. The protein localises to the extracellular matrix. It localises to the surface film. Its function is as follows. Contributes to the lung's defense against inhaled microorganisms, organic antigens and toxins. Interacts with compounds such as bacterial lipopolysaccharides, oligosaccharides and fatty acids and modulates leukocyte action in immune response. May participate in the extracellular reorganization or turnover of pulmonary surfactant. Binds strongly maltose residues and to a lesser extent other alpha-glucosyl moieties. In Bos taurus (Bovine), this protein is Pulmonary surfactant-associated protein D (SFTPD).